The primary structure comprises 78 residues: Small ribosomal subunit protein bS18 (78 aa).

This sequence belongs to the bacterial ribosomal protein bS18 family. As to quaternary structure, part of the 30S ribosomal subunit. Forms a tight heterodimer with protein bS6.

Its function is as follows. Binds as a heterodimer with protein bS6 to the central domain of the 16S rRNA, where it helps stabilize the platform of the 30S subunit. The protein is Small ribosomal subunit protein bS18 of Acidothermus cellulolyticus (strain ATCC 43068 / DSM 8971 / 11B).